The primary structure comprises 177 residues: Large ribosomal subunit protein uL6 (177 aa).

It belongs to the universal ribosomal protein uL6 family. As to quaternary structure, part of the 50S ribosomal subunit.

Functionally, this protein binds to the 23S rRNA, and is important in its secondary structure. It is located near the subunit interface in the base of the L7/L12 stalk, and near the tRNA binding site of the peptidyltransferase center. The protein is Large ribosomal subunit protein uL6 of Photobacterium profundum (strain SS9).